A 276-amino-acid polypeptide reads, in one-letter code: Digeranylgeranylglyceryl phosphate synthase (276 aa).

Helical transmembrane passes span 12–34 (PHNC…GSVP), 38–60 (ILIL…NDYF), 84–104 (ALWY…LISL), 107–127 (FAFA…LKPL), 146–166 (GAIA…AFLV), 202–222 (VAAF…KAGV), 224–244 (VGYY…YLIL), and 256–276 (QLLL…AALM).

Belongs to the UbiA prenyltransferase family. DGGGP synthase subfamily. The cofactor is Mg(2+).

The protein localises to the cell membrane. It catalyses the reaction sn-3-O-(geranylgeranyl)glycerol 1-phosphate + (2E,6E,10E)-geranylgeranyl diphosphate = 2,3-bis-O-(geranylgeranyl)-sn-glycerol 1-phosphate + diphosphate. The protein operates within membrane lipid metabolism; glycerophospholipid metabolism. In terms of biological role, prenyltransferase that catalyzes the transfer of the geranylgeranyl moiety of geranylgeranyl diphosphate (GGPP) to the C2 hydroxyl of (S)-3-O-geranylgeranylglyceryl phosphate (GGGP). This reaction is the second ether-bond-formation step in the biosynthesis of archaeal membrane lipids. The chain is Digeranylgeranylglyceryl phosphate synthase from Thermococcus gammatolerans (strain DSM 15229 / JCM 11827 / EJ3).